A 636-amino-acid polypeptide reads, in one-letter code: uncharacterized protein (636 aa).

This is an uncharacterized protein from Bacillus subtilis (strain 168).